The following is a 241-amino-acid chain: DNA repair protein RecO (241 aa).

Belongs to the RecO family.

In terms of biological role, involved in DNA repair and RecF pathway recombination. This is DNA repair protein RecO from Rickettsia canadensis (strain McKiel).